A 366-amino-acid polypeptide reads, in one-letter code: L-tyrosine C(3)-methyltransferase (366 aa).

Over residues 1–12 the composition is skewed to polar residues; that stretch reads MTISLENTTVGQ. A disordered region spans residues 1 to 22; the sequence is MTISLENTTVGQNPAGGPPTGK. Glu223 lines the S-adenosyl-L-methionine pocket.

Belongs to the class I-like SAM-binding methyltransferase superfamily. Cation-independent O-methyltransferase family.

The catalysed reaction is L-tyrosine + S-adenosyl-L-methionine = 3-methyl-L-tyrosine + S-adenosyl-L-homocysteine + H(+). It functions in the pathway antibiotic biosynthesis. C-methyltransferase that mediates the methylation of tyrosine into 3-methyl-L-tyrosine (3-Me-Tyr) in biosynthesis of saframycin A, a potent antitumor antibiotic that belongs to the tetrahydroisoquinoline family. Involved in biosynthesis of 3-hydroxy-5-methyl-O-methyltyrosine (3-OH-5-Me-OMe-Tyr), a core structure of saframycin A. The sequence is that of L-tyrosine C(3)-methyltransferase from Streptomyces lavendulae.